Consider the following 513-residue polypeptide: Beta-amyrin 24-hydroxylase (513 aa).

A helical; Signal-anchor transmembrane segment spans residues 1 to 21 (MLDIKGYLVLFFLWFISTILI). C451 contacts heme.

It belongs to the cytochrome P450 family. Requires heme as cofactor.

The protein localises to the membrane. It carries out the reaction beta-amyrin + reduced [NADPH--hemoprotein reductase] + O2 = 24-hydroxy-beta-amyrin + oxidized [NADPH--hemoprotein reductase] + H2O + H(+). It catalyses the reaction sophoradiol + reduced [NADPH--hemoprotein reductase] + O2 = soyasapogenol B + oxidized [NADPH--hemoprotein reductase] + H2O + H(+). In terms of biological role, heme-containing cytochrome P450 involved in the biosynthesis of soyasaponins. Hydroxylates specifically the C-24 methyl group of the triterpenes beta-amyrin and sophoradiol. No activity with lupeol, butyrospermol, tirucalla-7,21-dien-3beta-ol, taraxasterol, psi-taraxasterol, bauerenol, alpha-amyrin and multiflorenol as substrates. This Glycine max (Soybean) protein is Beta-amyrin 24-hydroxylase (CYP93E1).